Reading from the N-terminus, the 455-residue chain is Argininosuccinate lyase (455 aa).

The protein belongs to the lyase 1 family. Argininosuccinate lyase subfamily.

The protein localises to the cytoplasm. It catalyses the reaction 2-(N(omega)-L-arginino)succinate = fumarate + L-arginine. The protein operates within amino-acid biosynthesis; L-arginine biosynthesis; L-arginine from L-ornithine and carbamoyl phosphate: step 3/3. The sequence is that of Argininosuccinate lyase from Shewanella baltica (strain OS195).